The primary structure comprises 329 residues: GTPase Obg (329 aa).

Positions 1–159 constitute an Obg domain; it reads MQFIDQARIS…WPLQLELKLL (159 aa). The OBG-type G domain maps to 160–328; the sequence is AEVGIIGLPN…MLDRVWSELG (169 aa). ATP is bound by residues 166 to 173, 191 to 195, 213 to 216, 280 to 283, and 309 to 311; these read GLPNAGKS, FTTLI, DIPG, NKQE, and SAA. Residues Ser-173 and Thr-193 each coordinate Mg(2+).

The protein belongs to the TRAFAC class OBG-HflX-like GTPase superfamily. OBG GTPase family. In terms of assembly, monomer. The cofactor is Mg(2+).

It is found in the cytoplasm. In terms of biological role, an essential GTPase which binds GTP, GDP and possibly (p)ppGpp with moderate affinity, with high nucleotide exchange rates and a fairly low GTP hydrolysis rate. Plays a role in control of the cell cycle, stress response, ribosome biogenesis and in those bacteria that undergo differentiation, in morphogenesis control. The protein is GTPase Obg of Synechococcus sp. (strain CC9311).